The sequence spans 307 residues: UDP-3-O-acyl-N-acetylglucosamine deacetylase (307 aa).

Positions 78, 241, and 245 each coordinate Zn(2+). The active-site Proton donor is histidine 268.

This sequence belongs to the LpxC family. The cofactor is Zn(2+).

It carries out the reaction a UDP-3-O-[(3R)-3-hydroxyacyl]-N-acetyl-alpha-D-glucosamine + H2O = a UDP-3-O-[(3R)-3-hydroxyacyl]-alpha-D-glucosamine + acetate. It functions in the pathway glycolipid biosynthesis; lipid IV(A) biosynthesis; lipid IV(A) from (3R)-3-hydroxytetradecanoyl-[acyl-carrier-protein] and UDP-N-acetyl-alpha-D-glucosamine: step 2/6. In terms of biological role, catalyzes the hydrolysis of UDP-3-O-myristoyl-N-acetylglucosamine to form UDP-3-O-myristoylglucosamine and acetate, the committed step in lipid A biosynthesis. The chain is UDP-3-O-acyl-N-acetylglucosamine deacetylase from Acidovorax ebreus (strain TPSY) (Diaphorobacter sp. (strain TPSY)).